Consider the following 748-residue polypeptide: Holliday junction recognition protein (748 aa).

Serine 123, serine 140, serine 185, serine 201, and serine 211 each carry phosphoserine. The interval 191–226 (PGYCSRISRKSPGDPAKPASSPREWDPLHPSSTDMA) is disordered. Lysine 354 is covalently cross-linked (Glycyl lysine isopeptide (Lys-Gly) (interchain with G-Cter in SUMO2)). Phosphoserine is present on residues serine 412, serine 448, and serine 473. Phosphoserine; by PKB/AKT1 is present on serine 486. Position 496 is a phosphoserine (serine 496). The segment at 512-574 (GRCLPKSDSS…PDKEVPGHGR (63 aa)) is disordered. Over residues 524–562 (LPKTNPTHSATRPQQTSDLHVQGNSSGIFRKSVSPSKTL) the composition is skewed to polar residues. Basic and acidic residues predominate over residues 565 to 574 (PDKEVPGHGR). Residues lysine 581 and lysine 586 each participate in a glycyl lysine isopeptide (Lys-Gly) (interchain with G-Cter in SUMO2) cross-link. Phosphoserine is present on residues serine 595 and serine 642. A disordered region spans residues 670–748 (RDGTRDHQFP…MLEKLETKSV (79 aa)). Residues 688–699 (PQGSGRQGNSLG) show a composition bias toward polar residues. The span at 721-748 (SEERGENTSYRMEEKSDFMLEKLETKSV) shows a compositional bias: basic and acidic residues.

Interacts with CENPA (via CATD domain); the interaction is direct and specific for CENPA since it does not interact with H3.1- or H3.3-containing nucleosomes. Heterotrimer composed of HJURP, CENPA and histone H4, where HJURP interacts with the dimer formed by CENPA and histone H4 and prevents tetramerization of CENPA and H4. Identified in a centromere complex containing histones H2A, H2B and H4, and at least CENPA, CENPB, CENPC, CENPT, CENPN, HJURP, SUPT16H, SSRP1 and RSF1. Interacts with 14-3-3 family members in a phosphorylation-dependent manner. Interacts with MSH5 and NBN. In terms of tissue distribution, according to PubMed:17256767, highly expressed in the thymus with lower levels in the placenta, small intestine, liver, skeletal muscle, and colon. According to PubMed:17823411, highly expressed in testis, and at a relatively lower level in thymus and bone marrow. Significantly overexpressed in many lung cancer samples, compared with normal lung.

It localises to the nucleus. Its subcellular location is the nucleolus. The protein localises to the chromosome. The protein resides in the centromere. Its function is as follows. Centromeric protein that plays a central role in the incorporation and maintenance of histone H3-like variant CENPA at centromeres. Acts as a specific chaperone for CENPA and is required for the incorporation of newly synthesized CENPA molecules into nucleosomes at replicated centromeres. Prevents CENPA-H4 tetramerization and prevents premature DNA binding by the CENPA-H4 tetramer. Directly binds Holliday junctions. This is Holliday junction recognition protein (HJURP) from Homo sapiens (Human).